The following is a 304-amino-acid chain: tRNA-uridine aminocarboxypropyltransferase 1 (304 aa).

Residue serine 2 is modified to N-acetylserine. The DXTW motif lies at 206–209 (DSTW).

The protein belongs to the TDD superfamily. DTWD1 family.

It localises to the nucleus. The enzyme catalyses a uridine in tRNA + S-adenosyl-L-methionine = a 3-[(3S)-3-amino-3-carboxypropyl]uridine in tRNA + S-methyl-5'-thioadenosine + H(+). In terms of biological role, catalyzes the formation of 3-(3-amino-3-carboxypropyl)uridine (acp3U) at position 20 in the D-loop of several cytoplasmic tRNAs (acp3U(20)). This is tRNA-uridine aminocarboxypropyltransferase 1 from Homo sapiens (Human).